Reading from the N-terminus, the 158-residue chain is Protein BTG2 (158 aa).

S147 carries the post-translational modification Phosphoserine; by MAPK1 and MAPK3. S149 bears the Phosphoserine; by MAPK14 mark.

This sequence belongs to the BTG family. In terms of assembly, interacts with PRKCABP. Interacts with CNOT7 and CNOT8; indicative for an association with the CCR4-NOT complex. Interacts with PIN1, inducing mitochondrial depolarization. Post-translationally, phosphorylated at Ser-147 by MAPK1/ERK2 and MAPK3/ERK1, and at Ser-149 by MAPK14, leading to PIN1-binding and mitochondrial depolarization.

Anti-proliferative protein; the function is mediated by association with deadenylase subunits of the CCR4-NOT complex. Activates mRNA deadenylation in a CNOT6 and CNOT7-dependent manner. In vitro can inhibit deadenylase activity of CNOT7 and CNOT8. Involved in cell cycle regulation. Could be involved in the growth arrest and differentiation of the neuronal precursors. Modulates transcription regulation mediated by ESR1. Involved in mitochondrial depolarization and neurite outgrowth. The protein is Protein BTG2 (BTG2) of Homo sapiens (Human).